The primary structure comprises 314 residues: Trimethylamine N-oxide-binding protein (314 aa).

Positions 1–24 (MKKIVSLMSALVISVVSFAGISNA) are cleaved as a signal peptide. Trimethylamine N-oxide-binding residues include Trp38, Trp85, Glu114, Trp164, and Trp212.

In terms of assembly, the complex is probably composed of two ATP-binding proteins (TmoW), two transmembrane proteins (TmoV) and a solute-binding protein (TmoX).

It localises to the periplasm. Functionally, part of the ABC transporter complex TmoXWV involved in trimethylamine N-oxide (TMAO) import. Possesses a high binding affinity toward TMAO, but presents little binding affinity toward betaine, carnitine, trimethylamine (TMA) or dimethylamine (DMA). The protein is Trimethylamine N-oxide-binding protein of Pelagibacter ubique (strain HTCC1062).